Reading from the N-terminus, the 102-residue chain is UV-induced protein uvi31 (102 aa).

This sequence belongs to the BolA/IbaG family.

The protein localises to the mitochondrion matrix. It localises to the cytoplasm. It is found in the nucleus. Functionally, acts as a mitochondrial iron-sulfur (Fe-S) cluster assembly factor that facilitates [4Fe-4S] cluster insertion into a subset of mitochondrial proteins such as lipoyl synthase (LS) and succinate dehydrogenase (SDH). Required during the last step of iron-sulfur protein assembly when the iron-sulfur cluster is inserted into the target protein. Probably acts together with the monothiol glutaredoxin grx5. Not required for [2Fe-2S] cluster insertion into mitochondrial proteins. May be involved in control of cell division, especially during the resumption from cell cycle arrest. The polypeptide is UV-induced protein uvi31 (Schizosaccharomyces pombe (strain 972 / ATCC 24843) (Fission yeast)).